We begin with the raw amino-acid sequence, 75 residues long: UPF0270 protein PputGB1_1339 (75 aa).

It belongs to the UPF0270 family.

This chain is UPF0270 protein PputGB1_1339, found in Pseudomonas putida (strain GB-1).